A 285-amino-acid chain; its full sequence is Protease HtpX homolog (285 aa).

The next 2 helical transmembrane spans lie at 7–27 (TAML…MIGG) and 30–50 (GMTI…WFSD). Residue His-131 coordinates Zn(2+). Glu-132 is a catalytic residue. His-135 contacts Zn(2+). 2 consecutive transmembrane segments (helical) span residues 146–166 (ITAT…FFGG) and 177–197 (IAGI…QMAI). Glu-202 contributes to the Zn(2+) binding site.

It belongs to the peptidase M48B family. Zn(2+) is required as a cofactor.

The protein localises to the cell inner membrane. The chain is Protease HtpX homolog from Burkholderia multivorans (strain ATCC 17616 / 249).